We begin with the raw amino-acid sequence, 84 residues long: RQC P-site tRNA stabilizing factor (84 aa).

The S4 RNA-binding domain maps to 1-64; it reads MRIDKFLQSV…IEEYTILQIP (64 aa).

The protein belongs to the RqcP family. Associates with stalled 50S ribosomal subunits. Binds to RqcH, 23S rRNA and the P-site tRNA. Does not require RqcH for association with 50S subunits.

Functionally, key component of the ribosome quality control system (RQC), a ribosome-associated complex that mediates the extraction of incompletely synthesized nascent chains from stalled ribosomes and their subsequent degradation. RqcH recruits Ala-charged tRNA, and with RqcP directs the elongation of stalled nascent chains on 50S ribosomal subunits, leading to non-templated C-terminal alanine extensions (Ala tail). The Ala tail promotes nascent chain degradation. RqcP is associated with the translocation-like movement of the peptidyl-tRNA from the A-site into the P-site. In Helicobacter pylori (strain J99 / ATCC 700824) (Campylobacter pylori J99), this protein is RQC P-site tRNA stabilizing factor.